Consider the following 566-residue polypeptide: Proline--tRNA ligase (566 aa).

It belongs to the class-II aminoacyl-tRNA synthetase family. ProS type 1 subfamily. Homodimer.

It is found in the cytoplasm. It catalyses the reaction tRNA(Pro) + L-proline + ATP = L-prolyl-tRNA(Pro) + AMP + diphosphate. Its function is as follows. Catalyzes the attachment of proline to tRNA(Pro) in a two-step reaction: proline is first activated by ATP to form Pro-AMP and then transferred to the acceptor end of tRNA(Pro). As ProRS can inadvertently accommodate and process non-cognate amino acids such as alanine and cysteine, to avoid such errors it has two additional distinct editing activities against alanine. One activity is designated as 'pretransfer' editing and involves the tRNA(Pro)-independent hydrolysis of activated Ala-AMP. The other activity is designated 'posttransfer' editing and involves deacylation of mischarged Ala-tRNA(Pro). The misacylated Cys-tRNA(Pro) is not edited by ProRS. In Shouchella clausii (strain KSM-K16) (Alkalihalobacillus clausii), this protein is Proline--tRNA ligase.